Consider the following 40-residue polypeptide: Alpha-conotoxin-like Lp1.6b (40 aa).

Positions 1 to 23 are excised as a propeptide; it reads VVLGPASDGRNAAANNKASDLIR. A Pyrrolidone carboxylic acid modification is found at Gln-24. 2 disulfides stabilise this stretch: Cys-26/Cys-32 and Cys-27/Cys-39.

The protein belongs to the conotoxin A superfamily. As to expression, expressed by the venom duct.

Its subcellular location is the secreted. In terms of biological role, alpha-conotoxins act on postsynaptic membranes, they bind to the nicotinic acetylcholine receptors (nAChR) and thus inhibit them. The sequence is that of Alpha-conotoxin-like Lp1.6b from Conus leopardus (Leopard cone).